The sequence spans 899 residues: Protein translocase subunit SecA (899 aa).

ATP contacts are provided by residues Q87, 105–109 (GEGKT), and D516. Residues C884, C886, C895, and H896 each coordinate Zn(2+).

Belongs to the SecA family. As to quaternary structure, monomer and homodimer. Part of the essential Sec protein translocation apparatus which comprises SecA, SecYEG and auxiliary proteins SecDF. Other proteins may also be involved. Zn(2+) is required as a cofactor.

It is found in the cell inner membrane. The protein localises to the cytoplasm. The enzyme catalyses ATP + H2O + cellular proteinSide 1 = ADP + phosphate + cellular proteinSide 2.. In terms of biological role, part of the Sec protein translocase complex. Interacts with the SecYEG preprotein conducting channel. Has a central role in coupling the hydrolysis of ATP to the transfer of proteins into and across the cell membrane, serving as an ATP-driven molecular motor driving the stepwise translocation of polypeptide chains across the membrane. The sequence is that of Protein translocase subunit SecA from Borrelia garinii subsp. bavariensis (strain ATCC BAA-2496 / DSM 23469 / PBi) (Borreliella bavariensis).